The following is a 233-amino-acid chain: Orotidine 5'-phosphate decarboxylase (233 aa).

Substrate is bound by residues D11, K34, 61-70, T117, R179, Q188, G208, and R209; that span reads DLKLHDIPNT. The active-site Proton donor is K63.

This sequence belongs to the OMP decarboxylase family. Type 1 subfamily. As to quaternary structure, homodimer.

The enzyme catalyses orotidine 5'-phosphate + H(+) = UMP + CO2. It functions in the pathway pyrimidine metabolism; UMP biosynthesis via de novo pathway; UMP from orotate: step 2/2. Functionally, catalyzes the decarboxylation of orotidine 5'-monophosphate (OMP) to uridine 5'-monophosphate (UMP). The polypeptide is Orotidine 5'-phosphate decarboxylase (Streptococcus pneumoniae (strain CGSP14)).